Consider the following 138-residue polypeptide: ATP synthase epsilon chain (138 aa).

Belongs to the ATPase epsilon chain family. In terms of assembly, F-type ATPases have 2 components, CF(1) - the catalytic core - and CF(0) - the membrane proton channel. CF(1) has five subunits: alpha(3), beta(3), gamma(1), delta(1), epsilon(1). CF(0) has three main subunits: a, b and c.

The protein resides in the cell inner membrane. In terms of biological role, produces ATP from ADP in the presence of a proton gradient across the membrane. This chain is ATP synthase epsilon chain, found in Geobacter sp. (strain M21).